A 304-amino-acid chain; its full sequence is MLKKDLLGIKDLTREEILEILDLAFEMKKLLNGEKYSQALRGKTVVTIFFEPSTRTRLSFEMAAKYLGAHYGNIEVATSSVVKGESLIDTIRTVERMKADVIVTRHNMSGTPHLLAKYTNASIINGGDGINEHPTQALLDMMTIKEKKGDFKGLKVAIIGDIMHSRVARSNIWGLKKLGAEVKVAGPSTLMPPQIEKMGVKVCYNAEEAIKDADVVMGLRIQLERQKSGLFPSIEEYREYFGINEERMRLAKSDAILMHPGPINRNVEVTSGAANASYSVIEEQITNGVAVRMALLKILCERRN.

Arginine 55 and threonine 56 together coordinate carbamoyl phosphate. Residue lysine 83 coordinates L-aspartate. Residues arginine 105, histidine 133, and glutamine 136 each contribute to the carbamoyl phosphate site. Positions 166 and 220 each coordinate L-aspartate. Carbamoyl phosphate is bound by residues glycine 261 and proline 262.

The protein belongs to the aspartate/ornithine carbamoyltransferase superfamily. ATCase family. As to quaternary structure, heterododecamer (2C3:3R2) of six catalytic PyrB chains organized as two trimers (C3), and six regulatory PyrI chains organized as three dimers (R2).

The catalysed reaction is carbamoyl phosphate + L-aspartate = N-carbamoyl-L-aspartate + phosphate + H(+). It functions in the pathway pyrimidine metabolism; UMP biosynthesis via de novo pathway; (S)-dihydroorotate from bicarbonate: step 2/3. Its function is as follows. Catalyzes the condensation of carbamoyl phosphate and aspartate to form carbamoyl aspartate and inorganic phosphate, the committed step in the de novo pyrimidine nucleotide biosynthesis pathway. The protein is Aspartate carbamoyltransferase catalytic subunit of Caldanaerobacter subterraneus subsp. tengcongensis (strain DSM 15242 / JCM 11007 / NBRC 100824 / MB4) (Thermoanaerobacter tengcongensis).